Reading from the N-terminus, the 289-residue chain is 4-diphosphocytidyl-2-C-methyl-D-erythritol kinase (289 aa).

The active site involves Lys-16. 99–109 (PMGGGLGGGSS) serves as a coordination point for ATP. Asp-141 is an active-site residue.

Belongs to the GHMP kinase family. IspE subfamily.

The catalysed reaction is 4-CDP-2-C-methyl-D-erythritol + ATP = 4-CDP-2-C-methyl-D-erythritol 2-phosphate + ADP + H(+). Its pathway is isoprenoid biosynthesis; isopentenyl diphosphate biosynthesis via DXP pathway; isopentenyl diphosphate from 1-deoxy-D-xylulose 5-phosphate: step 3/6. In terms of biological role, catalyzes the phosphorylation of the position 2 hydroxy group of 4-diphosphocytidyl-2C-methyl-D-erythritol. The polypeptide is 4-diphosphocytidyl-2-C-methyl-D-erythritol kinase (Ralstonia pickettii (strain 12J)).